Reading from the N-terminus, the 513-residue chain is Activin receptor type-2B (513 aa).

The N-terminal stretch at 1-18 (MTAPWAALALLWGSLCAG) is a signal peptide. The Extracellular portion of the chain corresponds to 19-137 (SGRGEAETRE…PPPTAPTLLT (119 aa)). 5 cysteine pairs are disulfide-bonded: cysteine 29–cysteine 59, cysteine 49–cysteine 77, cysteine 84–cysteine 103, cysteine 90–cysteine 102, and cysteine 104–cysteine 109. N-linked (GlcNAc...) asparagine glycosylation is found at asparagine 42 and asparagine 65. Residues 138–158 (VLAYSLLPIGGLSLIVLLAFW) form a helical membrane-spanning segment. Residues 159–513 (MYRHRKPPYG…VDLLPKESSI (355 aa)) lie on the Cytoplasmic side of the membrane. One can recognise a Protein kinase domain in the interval 190–481 (LQLLEIKARG…AGCVEERVSL (292 aa)). ATP-binding positions include 196-204 (KARGRFGCV) and lysine 217. Catalysis depends on aspartate 322, which acts as the Proton acceptor. The tract at residues 492–513 (DCLVSLVTSVTNVDLLPKESSI) is interaction with DYNLT1.

It belongs to the protein kinase superfamily. TKL Ser/Thr protein kinase family. TGFB receptor subfamily. In terms of assembly, forms an activin receptor complex with activin type II receptors such as ACVR1B. Interacts with VPS39. Interacts with DYNLT1. Interacts with BMP3. Interacts with BMP2. Mg(2+) serves as cofactor. The cofactor is Mn(2+). Post-translationally, phosphorylated. Constitutive phosphorylation is in part catalyzed by its own kinase activity.

It localises to the cell membrane. It carries out the reaction L-threonyl-[receptor-protein] + ATP = O-phospho-L-threonyl-[receptor-protein] + ADP + H(+). The catalysed reaction is L-seryl-[receptor-protein] + ATP = O-phospho-L-seryl-[receptor-protein] + ADP + H(+). In terms of biological role, transmembrane serine/threonine kinase activin type-2 receptor forming an activin receptor complex with activin type-1 serine/threonine kinase receptors (ACVR1, ACVR1B or ACVR1c). Transduces the activin signal from the cell surface to the cytoplasm and is thus regulating many physiological and pathological processes including neuronal differentiation and neuronal survival, hair follicle development and cycling, FSH production by the pituitary gland, wound healing, extracellular matrix production, immunosuppression and carcinogenesis. Activin is also thought to have a paracrine or autocrine role in follicular development in the ovary. Within the receptor complex, the type-2 receptors act as a primary activin receptors (binds activin-A/INHBA, activin-B/INHBB as well as inhibin-A/INHA-INHBA). The type-1 receptors like ACVR1B act as downstream transducers of activin signals. Activin binds to type-2 receptor at the plasma membrane and activates its serine-threonine kinase. The activated receptor type-2 then phosphorylates and activates the type-1 receptor. Once activated, the type-1 receptor binds and phosphorylates the SMAD proteins SMAD2 and SMAD3, on serine residues of the C-terminal tail. Soon after their association with the activin receptor and subsequent phosphorylation, SMAD2 and SMAD3 are released into the cytoplasm where they interact with the common partner SMAD4. This SMAD complex translocates into the nucleus where it mediates activin-induced transcription. Inhibitory SMAD7, which is recruited to ACVR1B through FKBP1A, can prevent the association of SMAD2 and SMAD3 with the activin receptor complex, thereby blocking the activin signal. Activin signal transduction is also antagonized by the binding to the receptor of inhibin-B via the IGSF1 inhibin coreceptor. The polypeptide is Activin receptor type-2B (Acvr2b) (Rattus norvegicus (Rat)).